The chain runs to 142 residues: Transcriptional regulator MraZ (142 aa).

SpoVT-AbrB domains are found at residues 5 to 51 (ASAL…PRPE) and 77 to 120 (AADV…DAAT).

The protein belongs to the MraZ family. As to quaternary structure, forms oligomers.

It is found in the cytoplasm. The protein localises to the nucleoid. This Cupriavidus taiwanensis (strain DSM 17343 / BCRC 17206 / CCUG 44338 / CIP 107171 / LMG 19424 / R1) (Ralstonia taiwanensis (strain LMG 19424)) protein is Transcriptional regulator MraZ.